A 186-amino-acid chain; its full sequence is uncharacterized protein (186 aa).

An N-acetyltransferase domain is found at 12–184 (LLKSPVEEDD…HIYKLSKQIR (173 aa)).

This sequence belongs to the acetyltransferase family.

It localises to the cytoplasm. The protein resides in the nucleus. This is an uncharacterized protein from Schizosaccharomyces pombe (strain 972 / ATCC 24843) (Fission yeast).